We begin with the raw amino-acid sequence, 196 residues long: dITP/XTP pyrophosphatase (196 aa).

7-12 (TGNAGK) is a binding site for substrate. Positions 39 and 68 each coordinate Mg(2+). Residue Asp68 is the Proton acceptor of the active site. Substrate-binding positions include Ser69, 153-156 (HGYD), Lys176, and 181-182 (HR).

Belongs to the HAM1 NTPase family. As to quaternary structure, homodimer. Requires Mg(2+) as cofactor.

The catalysed reaction is XTP + H2O = XMP + diphosphate + H(+). It carries out the reaction dITP + H2O = dIMP + diphosphate + H(+). The enzyme catalyses ITP + H2O = IMP + diphosphate + H(+). Functionally, pyrophosphatase that catalyzes the hydrolysis of nucleoside triphosphates to their monophosphate derivatives, with a high preference for the non-canonical purine nucleotides XTP (xanthosine triphosphate), dITP (deoxyinosine triphosphate) and ITP. Seems to function as a house-cleaning enzyme that removes non-canonical purine nucleotides from the nucleotide pool, thus preventing their incorporation into DNA/RNA and avoiding chromosomal lesions. The polypeptide is dITP/XTP pyrophosphatase (Thioalkalivibrio sulfidiphilus (strain HL-EbGR7)).